We begin with the raw amino-acid sequence, 56 residues long: Large ribosomal subunit protein bL32 (56 aa).

The span at 1–16 shows a compositional bias: basic residues; that stretch reads MAVQKSKKSRSRRDMR. The tract at residues 1-56 is disordered; it reads MAVQKSKKSRSRRDMRRSHDAIDGPTLSVDSTTGETHRRHHVTADGYYKGRKVVNK.

Belongs to the bacterial ribosomal protein bL32 family.

The sequence is that of Large ribosomal subunit protein bL32 from Idiomarina loihiensis (strain ATCC BAA-735 / DSM 15497 / L2-TR).